The primary structure comprises 310 residues: Tagatose-6-phosphate kinase (310 aa).

The protein belongs to the carbohydrate kinase PfkB family. LacC subfamily.

The enzyme catalyses D-tagatofuranose 6-phosphate + ATP = D-tagatofuranose 1,6-bisphosphate + ADP + H(+). The protein operates within carbohydrate metabolism; D-tagatose 6-phosphate degradation; D-glyceraldehyde 3-phosphate and glycerone phosphate from D-tagatose 6-phosphate: step 1/2. The chain is Tagatose-6-phosphate kinase from Staphylococcus epidermidis (strain ATCC 12228 / FDA PCI 1200).